Reading from the N-terminus, the 72-residue chain is Translation initiation factor IF-1 (72 aa).

One can recognise an S1-like domain in the interval 1-72 (MAKEDNIEMQ…SKGRIVFRAR (72 aa)).

The protein belongs to the IF-1 family. In terms of assembly, component of the 30S ribosomal translation pre-initiation complex which assembles on the 30S ribosome in the order IF-2 and IF-3, IF-1 and N-formylmethionyl-tRNA(fMet); mRNA recruitment can occur at any time during PIC assembly.

It is found in the cytoplasm. One of the essential components for the initiation of protein synthesis. Stabilizes the binding of IF-2 and IF-3 on the 30S subunit to which N-formylmethionyl-tRNA(fMet) subsequently binds. Helps modulate mRNA selection, yielding the 30S pre-initiation complex (PIC). Upon addition of the 50S ribosomal subunit IF-1, IF-2 and IF-3 are released leaving the mature 70S translation initiation complex. This is Translation initiation factor IF-1 from Shewanella frigidimarina (strain NCIMB 400).